The sequence spans 427 residues: Peptidase B (427 aa).

The Mn(2+) site is built by Lys195 and Asp200. Lys207 is an active-site residue. Residues Asp218, Asp277, and Glu279 each contribute to the Mn(2+) site. Residue Arg281 is part of the active site.

The protein belongs to the peptidase M17 family. As to quaternary structure, homohexamer. It depends on Mn(2+) as a cofactor.

It localises to the cytoplasm. It catalyses the reaction Release of an N-terminal amino acid, Xaa, from a peptide or arylamide. Xaa is preferably Glu or Asp but may be other amino acids, including Leu, Met, His, Cys and Gln.. Probably plays an important role in intracellular peptide degradation. The chain is Peptidase B from Escherichia coli O7:K1 (strain IAI39 / ExPEC).